The sequence spans 77 residues: Phytosulfokines 5 (77 aa).

Positions Met-1 to Ala-24 are cleaved as a signal peptide. Residues Arg-25–Asp-68 constitute a propeptide that is removed on maturation. Sulfotyrosine occurs at positions 69 and 71. Residues Asn-74–Pro-77 constitute a propeptide that is removed on maturation.

The protein belongs to the phytosulfokine family. Sulfation is important for activity and for the binding to a putative membrane receptor. Post-translationally, PSK-beta is an enzymatic derivative of PSK-alpha. As to expression, expressed in stems, roots, mature leaves and flowers. Most abundant in vascular bundles.

Its subcellular location is the secreted. In terms of biological role, promotes plant cell differentiation, organogenesis and somatic embryogenesis as well as cell proliferation. May be involved in the low quiescent center cell proliferation. This chain is Phytosulfokines 5 (PSK5), found in Arabidopsis thaliana (Mouse-ear cress).